We begin with the raw amino-acid sequence, 349 residues long: MLTERQELILKTIIMDFTQTHEPVGSKTVMNQLPIKVSSATIRNEMAVLEDQGLIEKTHSSSGRIPSSEGYRYYLDNLVEPLKLPESVYNTIGSQLDRPFHQVNEIVQEAARILSDLTNYTAFAEGPEKRDVKVTGFRIVPLSSRQVMAILVTSDGNVQNQVYALPHNIYGEEIEKAVHMINDQLVGKSLNEINVSLLSELAKSELGGEHVTELLSLVEDVLKDAASEQMYVDGQINLLNNTSEHNVKDIRSLYELIDHDNLFSNLMDSKADSKDKNYPIKVKLGSELPNDLLKNYSLLTAEYNVGSHGKGTIALLGPTNMPYSQMIGLLEYFRNELAKKLLDYYGKFQ.

The protein belongs to the HrcA family.

Its function is as follows. Negative regulator of class I heat shock genes (grpE-dnaK-dnaJ and groELS operons). Prevents heat-shock induction of these operons. The chain is Heat-inducible transcription repressor HrcA from Lactobacillus acidophilus (strain ATCC 700396 / NCK56 / N2 / NCFM).